The following is a 459-amino-acid chain: MYKEDTIAAISTPHGAGGVGIIRISGDKAFEIAERIFRGKKDFKLIRSHTINYGKIVNPENGAVLDEVLLSKMEKPKTFTREDVVEINCHGGMVVLKNILELCIKEGARLAEPGEFTKRAFLNGRIDLSQAEAVIDLINSKTNESSKAAISQLEGKLSRKIKDARSKLIELLAHIEVTVDYPEHDIEEITGNMVYEEIGKIKEKLCDIVKSFERGRIIREGIDAVIIGKPNVGKSSLLNELSGKSKAIVTDIPGTTRDIIEEYININGIPLRIIDTAGIRETEDVVEKIGVEKTHRAIDEADLVIMMIDAKRGMDEDDNRILTMLGDKKLIILINKIDLVDEKQINEIESLLKGRKCIRTSVKEGTGISELENAITELFVQGEVSVNEEILLTNIRHKNLIDMAISSIEKAMESIDGSMPLDLVSIDITDAADYLGQITGESVSEDVMHEIFSKFCLGK.

(6S)-5-formyl-5,6,7,8-tetrahydrofolate-binding residues include Arg-23, Glu-86, and Arg-125. Residues 221–380 (GIDAVIIGKP…LENAITELFV (160 aa)) enclose the TrmE-type G domain. A K(+)-binding site is contributed by Asn-231. GTP-binding positions include 231 to 236 (NVGKSS), 250 to 256 (TDIPGTT), and 275 to 278 (DTAG). Ser-235 is a binding site for Mg(2+). K(+) is bound by residues Thr-250, Ile-252, and Thr-255. Thr-256 contributes to the Mg(2+) binding site. Lys-459 is a (6S)-5-formyl-5,6,7,8-tetrahydrofolate binding site.

The protein belongs to the TRAFAC class TrmE-Era-EngA-EngB-Septin-like GTPase superfamily. TrmE GTPase family. Homodimer. Heterotetramer of two MnmE and two MnmG subunits. The cofactor is K(+).

The protein resides in the cytoplasm. In terms of biological role, exhibits a very high intrinsic GTPase hydrolysis rate. Involved in the addition of a carboxymethylaminomethyl (cmnm) group at the wobble position (U34) of certain tRNAs, forming tRNA-cmnm(5)s(2)U34. This chain is tRNA modification GTPase MnmE, found in Acetivibrio thermocellus (strain ATCC 27405 / DSM 1237 / JCM 9322 / NBRC 103400 / NCIMB 10682 / NRRL B-4536 / VPI 7372) (Clostridium thermocellum).